The primary structure comprises 179 residues: Cell division protein ZapC (179 aa).

The protein belongs to the ZapC family. As to quaternary structure, interacts directly with FtsZ.

It is found in the cytoplasm. Its function is as follows. Contributes to the efficiency of the cell division process by stabilizing the polymeric form of the cell division protein FtsZ. Acts by promoting interactions between FtsZ protofilaments and suppressing the GTPase activity of FtsZ. The protein is Cell division protein ZapC of Ferrimonas balearica (strain DSM 9799 / CCM 4581 / KCTC 23876 / PAT).